The following is a 523-amino-acid chain: Translation initiation factor eIF2B subunit delta (523 aa).

The tract at residues 1–154 (MAAVAVAVRE…EHTQADDPTL (154 aa)) is disordered. Ala2 is subject to N-acetylalanine. Residue Ser12 is modified to Phosphoserine. The segment covering 31-40 (MTQEEKLQLR) has biased composition (basic and acidic residues). Residues 41 to 51 (KEKKQQKKKRK) show a composition bias toward basic residues. The residue at position 85 (Thr85) is a Phosphothreonine. Positions 95–120 (TKAELRAERRAKQEAERALKQARKGE) are enriched in basic and acidic residues. Ser129 carries the post-translational modification Phosphoserine. The interval 170 to 179 (RKDYGSKVSL) is may bind the chemical integrated stress response (ISR) inhibitor ISRIB.

The protein belongs to the eIF-2B alpha/beta/delta subunits family. As to quaternary structure, component of the translation initiation factor 2B (eIF2B) complex which is a heterodecamer of two sets of five different subunits: alpha, beta, gamma, delta and epsilon. Subunits alpha, beta and delta comprise a regulatory subcomplex and subunits epsilon and gamma comprise a catalytic subcomplex. Within the complex, the hexameric regulatory complex resides at the center, with the two heterodimeric catalytic subcomplexes bound on opposite sides.

The protein localises to the cytoplasm. It is found in the cytosol. With respect to regulation, activated by the chemical integrated stress response (ISR) inhibitor ISRIB which stimulates guanine nucleotide exchange factor activity for both phosphorylated and unphosphorylated eIF2. Its function is as follows. Acts as a component of the translation initiation factor 2B (eIF2B) complex, which catalyzes the exchange of GDP for GTP on eukaryotic initiation factor 2 (eIF2) gamma subunit. Its guanine nucleotide exchange factor activity is repressed when bound to eIF2 complex phosphorylated on the alpha subunit, thereby limiting the amount of methionyl-initiator methionine tRNA available to the ribosome and consequently global translation is repressed. This is Translation initiation factor eIF2B subunit delta (EIF2B4) from Oryctolagus cuniculus (Rabbit).